A 181-amino-acid polypeptide reads, in one-letter code: CASP-like protein 1F2 (181 aa).

The Cytoplasmic segment spans residues 1 to 18 (MADIETKSSQNQPLKTQN). Residues 19-39 (IFIGAQIFLRIVVIAASFAST) form a helical membrane-spanning segment. Topologically, residues 40 to 70 (WLMLTNKQTIDIGGFVLDANYSYSPEFKFLS) are extracellular. N59 is a glycosylation site (N-linked (GlcNAc...) asparagine). A helical membrane pass occupies residues 71–91 (YANIVVGAFSFVSLLFLVLVG). At 92-100 (RRSSNPTYY) the chain is on the cytoplasmic side. A helical transmembrane segment spans residues 101-121 (FILFLHDLALMSLVLGGCAAA). Residues 122-150 (TVIGSLGKYGNSHTGWMQICDHFGKFCKR) lie on the Extracellular side of the membrane. The chain crosses the membrane as a helical span at residues 151 to 171 (ATTSVAFSYFSLVCLLILTIT). The Cytoplasmic segment spans residues 172 to 181 (SASKSRQIQV).

The protein belongs to the Casparian strip membrane proteins (CASP) family. As to quaternary structure, homodimer and heterodimers.

The protein resides in the cell membrane. The sequence is that of CASP-like protein 1F2 from Populus trichocarpa (Western balsam poplar).